Consider the following 263-residue polypeptide: Esterase mokD (263 aa).

Active-site charge relay system residues include S134, D208, and H236.

This sequence belongs to the LovG family.

It carries out the reaction dihydromonacolin L-[lovastatin nonaketide synthase] + H2O = holo-[lovastatin nonaketide synthase] + dihydromonacolin L carboxylate + H(+). Its pathway is polyketide biosynthesis; lovastatin biosynthesis. Esterase; part of the gene cluster that mediates the biosynthesis of monakolin K, also known as lovastatin, and which acts as a potent competitive inhibitor of HMG-CoA reductase. Monakolin K biosynthesis is performed in two stages. The first stage is catalyzed by the nonaketide synthase mokA, which belongs to type I polyketide synthases and catalyzes the iterative nine-step formation of the polyketide. This PKS stage completed by the action of dehydrogenase mokE, which catalyzes the NADPH-dependent reduction of the unsaturated tetra-, penta- and heptaketide intermediates that arise during the mokA-mediated biosynthesis of the nonaketide chain and leads to dihydromonacolin L. Covalently bound dihydromonacolin L is released from mokA by the mokD esterase. Conversion of dihydromonacolin L into monacolin L and then monacolin J is subsequently performed with the participation of molecular oxygen and P450 monoogygenase mokC. Finally, mokF performs the conversion of monacoline J to monacoline K through the addition of the side-chain diketide moiety (2R)-2-methylbutanoate produced by the diketide synthase mokB. In Monascus pilosus (Red mold), this protein is Esterase mokD.